The following is a 349-amino-acid chain: NADH-ubiquinone oxidoreductase chain 2 (349 aa).

The next 10 membrane-spanning stretches (helical) occupy residues Pro3–Ser23, His25–Ala45, Ala66–Ile86, Val98–Val118, Ile149–Asn171, Ile178–Ala197, Leu202–Leu219, Leu240–Phe260, Gly274–Leu294, and Phe319–Leu339.

The protein belongs to the complex I subunit 2 family.

It localises to the mitochondrion inner membrane. The catalysed reaction is a ubiquinone + NADH + 5 H(+)(in) = a ubiquinol + NAD(+) + 4 H(+)(out). Functionally, core subunit of the mitochondrial membrane respiratory chain NADH dehydrogenase (Complex I) that is believed to belong to the minimal assembly required for catalysis. Complex I functions in the transfer of electrons from NADH to the respiratory chain. The immediate electron acceptor for the enzyme is believed to be ubiquinone. The protein is NADH-ubiquinone oxidoreductase chain 2 (MT-ND2) of Salmo salar (Atlantic salmon).